A 162-amino-acid chain; its full sequence is Xylulose kinase (162 aa).

The disordered stretch occupies residues 16 to 39 (GGHSATPRPATGPAGPAAHSGRHQ). The segment covering 20-33 (ATPRPATGPAGPAA) has biased composition (low complexity).

The protein belongs to the FGGY kinase family.

It carries out the reaction D-xylulose + ATP = D-xylulose 5-phosphate + ADP + H(+). In terms of biological role, catalyzes the phosphorylation of D-xylulose to D-xylulose 5-phosphate. The sequence is that of Xylulose kinase from Actinoplanes sp. (strain ATCC 31351 / 3876) (Ampullariella sp.).